Consider the following 522-residue polypeptide: Light-independent protochlorophyllide reductase subunit B (522 aa).

Residue Asp36 participates in [4Fe-4S] cluster binding. The active-site Proton donor is the Asp290. 425–426 (GL) provides a ligand contact to substrate.

It belongs to the ChlB/BchB/BchZ family. As to quaternary structure, protochlorophyllide reductase is composed of three subunits; ChlL, ChlN and ChlB. Forms a heterotetramer of two ChlB and two ChlN subunits. It depends on [4Fe-4S] cluster as a cofactor.

It catalyses the reaction chlorophyllide a + oxidized 2[4Fe-4S]-[ferredoxin] + 2 ADP + 2 phosphate = protochlorophyllide a + reduced 2[4Fe-4S]-[ferredoxin] + 2 ATP + 2 H2O. It participates in porphyrin-containing compound metabolism; chlorophyll biosynthesis (light-independent). Functionally, component of the dark-operative protochlorophyllide reductase (DPOR) that uses Mg-ATP and reduced ferredoxin to reduce ring D of protochlorophyllide (Pchlide) to form chlorophyllide a (Chlide). This reaction is light-independent. The NB-protein (ChlN-ChlB) is the catalytic component of the complex. The sequence is that of Light-independent protochlorophyllide reductase subunit B from Synechococcus sp. (strain CC9311).